Reading from the N-terminus, the 115-residue chain is NAD(P)H-quinone oxidoreductase subunit M (115 aa).

The protein belongs to the complex I NdhM subunit family. As to quaternary structure, NDH-1 can be composed of about 15 different subunits; different subcomplexes with different compositions have been identified which probably have different functions.

The protein localises to the cellular thylakoid membrane. The enzyme catalyses a plastoquinone + NADH + (n+1) H(+)(in) = a plastoquinol + NAD(+) + n H(+)(out). It carries out the reaction a plastoquinone + NADPH + (n+1) H(+)(in) = a plastoquinol + NADP(+) + n H(+)(out). In terms of biological role, NDH-1 shuttles electrons from an unknown electron donor, via FMN and iron-sulfur (Fe-S) centers, to quinones in the respiratory and/or the photosynthetic chain. The immediate electron acceptor for the enzyme in this species is believed to be plastoquinone. Couples the redox reaction to proton translocation, and thus conserves the redox energy in a proton gradient. Cyanobacterial NDH-1 also plays a role in inorganic carbon-concentration. The polypeptide is NAD(P)H-quinone oxidoreductase subunit M (Prochlorococcus marinus (strain MIT 9515)).